The following is a 439-amino-acid chain: Transcriptional enhancer factor TEF-5 (439 aa).

The span at 1–12 (MASNSWTANSSP) shows a compositional bias: polar residues. The segment at 1-34 (MASNSWTANSSPGEAREDGSEGLDKGLDNDAEGV) is disordered. Alanine 2 is subject to N-acetylalanine. The segment covering 14–28 (EAREDGSEGLDKGLD) has biased composition (basic and acidic residues). A DNA-binding region (TEA) is located at residues 28–104 (DNDAEGVWSP…QVLARKKVRE (77 aa)). Phosphoserine is present on serine 148. The interval 173–439 (GPSQDIKPFA…QHHVYKLVKD (267 aa)) is transcriptional activation.

In terms of assembly, interacts with YAP1 and WWTR1/TAZ. Expressed in embryos as well as in many adult tissues.

Its subcellular location is the nucleus. In terms of biological role, transcription factor which plays a key role in the Hippo signaling pathway, a pathway involved in organ size control and tumor suppression by restricting proliferation and promoting apoptosis. The core of this pathway is composed of a kinase cascade wherein MST1/MST2, in complex with its regulatory protein SAV1, phosphorylates and activates LATS1/2 in complex with its regulatory protein MOB1, which in turn phosphorylates and inactivates YAP1 oncoprotein and WWTR1/TAZ. Acts by mediating gene expression of YAP1 and WWTR1/TAZ, thereby regulating cell proliferation, migration and epithelial mesenchymal transition (EMT) induction. In Mus musculus (Mouse), this protein is Transcriptional enhancer factor TEF-5 (Tead3).